The primary structure comprises 367 residues: Putative S-adenosyl-L-methionine-dependent methyltransferase MT0751 (367 aa).

Residues Asp137 and 166–167 (DL) each bind S-adenosyl-L-methionine. The span at 348–358 (TRSDAHQASTT) shows a compositional bias: polar residues. The interval 348 to 367 (TRSDAHQASTTAPPPPGLTG) is disordered.

Belongs to the UPF0677 family.

Its function is as follows. Exhibits S-adenosyl-L-methionine-dependent methyltransferase activity. The chain is Putative S-adenosyl-L-methionine-dependent methyltransferase MT0751 from Mycobacterium tuberculosis (strain CDC 1551 / Oshkosh).